The following is a 214-amino-acid chain: Cytochrome b (214 aa).

The next 4 helical transmembrane spans lie at Phe31–Ile51, Trp75–Ile96, Trp111–Leu131, and Phe176–Leu196. Heme b-binding residues include His81 and His95. Residues His180 and His194 each contribute to the heme b site. His199 lines the a ubiquinone pocket.

The protein belongs to the cytochrome b family. In terms of assembly, the cytochrome bc1 complex contains 3 respiratory subunits (MT-CYB, CYC1 and UQCRFS1), 2 core proteins (UQCRC1 and UQCRC2) and probably 6 low-molecular weight proteins. The cofactor is heme b.

The protein localises to the mitochondrion inner membrane. Its function is as follows. Component of the ubiquinol-cytochrome c reductase complex (complex III or cytochrome b-c1 complex) that is part of the mitochondrial respiratory chain. The b-c1 complex mediates electron transfer from ubiquinol to cytochrome c. Contributes to the generation of a proton gradient across the mitochondrial membrane that is then used for ATP synthesis. This is Cytochrome b (MT-CYB) from Bothrops atrox (Barba amarilla).